Consider the following 421-residue polypeptide: MTIRRPGGACLFGLLLAVSPTPFPRRTTLTPIRTLLTPFGEFFKGQASSGLVLILAAVLAFAWANSPWRESYFTLRELPLTLSLGSWTLSHGLYWWVNDLLMALFFLLVGLEIKRELRVGELRHPRQASLALFAALGGMLLPAGLYTLVNAGGPGAAGWGVPMATDIAFALGVLALLGDRVSPGLKVLLAALAILDDLGAVLVIALFYTSGLNLLALGLMGAVWALGLGLNAAGVRHLGPYAVLGAALWLTTLASGLHPTVAGVLLALTIPLGRRAEQEDAEPSPLHRLEHGLHPWSAFLILPLFALFNAGVSVAGGSLDRVTLGVVLGLIIGKPLGVVAFAWLAVQLRAASLPEDVTWPGMLGLGLLAGIGFTMALFIGGLAFPEGALLNAAKLGILTASVLAALAAITVLTRAFPRQPR.

The next 11 membrane-spanning stretches (helical) occupy residues Ser48–Trp68, Leu93–Ile113, Ser129–Val149, Ala157–Leu177, Val187–Phe207, Leu215–Val235, Leu253–Gly273, Phe299–Leu319, Val326–Val346, Gly364–Phe384, and Ala392–Leu412.

Belongs to the NhaA Na(+)/H(+) (TC 2.A.33) antiporter family.

Its subcellular location is the cell membrane. The enzyme catalyses Na(+)(in) + 2 H(+)(out) = Na(+)(out) + 2 H(+)(in). Na(+)/H(+) antiporter that extrudes sodium in exchange for external protons. The protein is Na(+)/H(+) antiporter NhaA 1 of Deinococcus geothermalis (strain DSM 11300 / CIP 105573 / AG-3a).